The primary structure comprises 448 residues: Glutamyl-tRNA reductase (448 aa).

Residues 49–52, serine 109, 114–116, and glutamine 120 contribute to the substrate site; these read TCNR and ETQ. Residue cysteine 50 is the Nucleophile of the active site. 189–194 is an NADP(+) binding site; it reads GAGEMS.

Belongs to the glutamyl-tRNA reductase family. As to quaternary structure, homodimer.

It catalyses the reaction (S)-4-amino-5-oxopentanoate + tRNA(Glu) + NADP(+) = L-glutamyl-tRNA(Glu) + NADPH + H(+). It participates in porphyrin-containing compound metabolism; protoporphyrin-IX biosynthesis; 5-aminolevulinate from L-glutamyl-tRNA(Glu): step 1/2. Functionally, catalyzes the NADPH-dependent reduction of glutamyl-tRNA(Glu) to glutamate 1-semialdehyde (GSA). In Staphylococcus haemolyticus (strain JCSC1435), this protein is Glutamyl-tRNA reductase.